Reading from the N-terminus, the 709-residue chain is Elongation factor G (709 aa).

Positions 8-297 constitute a tr-type G domain; the sequence is ANTRNIGIMA…AVIDYLPSPL (290 aa). Residues 17–24, 81–85, and 135–138 contribute to the GTP site; these read AHVDAGKT, DTPGH, and NKMD.

Belongs to the TRAFAC class translation factor GTPase superfamily. Classic translation factor GTPase family. EF-G/EF-2 subfamily.

The protein localises to the cytoplasm. In terms of biological role, catalyzes the GTP-dependent ribosomal translocation step during translation elongation. During this step, the ribosome changes from the pre-translocational (PRE) to the post-translocational (POST) state as the newly formed A-site-bound peptidyl-tRNA and P-site-bound deacylated tRNA move to the P and E sites, respectively. Catalyzes the coordinated movement of the two tRNA molecules, the mRNA and conformational changes in the ribosome. The protein is Elongation factor G of Lactococcus lactis subsp. cremoris (strain MG1363).